The sequence spans 41 residues: Ranatuerin-2PLg (41 aa).

Positions 1–11 (DDGVEMTEEEV) are excised as a propeptide. Cys-36 and Cys-41 are oxidised to a cystine.

Belongs to the frog skin active peptide (FSAP) family. Ranatuerin subfamily.

Its subcellular location is the secreted. Functionally, antimicrobial peptide. This Lithobates palustris (Pickerel frog) protein is Ranatuerin-2PLg.